The primary structure comprises 30 residues: Dermaseptin-J10 (30 aa).

Expressed by the skin glands.

It is found in the secreted. In terms of biological role, has antimicrobial activity. This is Dermaseptin-J10 from Phasmahyla jandaia (Jandaia leaf frog).